We begin with the raw amino-acid sequence, 78 residues long: Ferredoxin 7Fe (78 aa).

2 4Fe-4S ferredoxin-type domains span residues 2–29 (AYVI…IHEG) and 31–60 (DQYY…HEDF). [3Fe-4S] cluster-binding residues include Cys9 and Cys17. [4Fe-4S] cluster-binding residues include Cys21, Cys40, Cys43, and Cys46. A [3Fe-4S] cluster-binding site is contributed by Cys50.

In terms of assembly, monomer. [4Fe-4S] cluster serves as cofactor. Requires [3Fe-4S] cluster as cofactor.

This chain is Ferredoxin 7Fe (fdxA), found in Hydrogenibacillus schlegelii (Bacillus schlegelii).